The chain runs to 317 residues: Putative 12-oxophytodienoate reductase 10 (317 aa).

26–28 provides a ligand contact to FMN; sequence PVG. 117-120 contributes to the substrate binding site; that stretch reads HGAN. The active-site Proton donor is tyrosine 122. Residue arginine 169 coordinates FMN. Residue arginine 209 participates in substrate binding. Residues glycine 244 and 265–266 contribute to the FMN site; that span reads GR.

The protein belongs to the NADH:flavin oxidoreductase/NADH oxidase family. The cofactor is FMN.

Functionally, putative oxophytodienoate reductase that may be involved in the biosynthesis or metabolism of oxylipin signaling molecules. The protein is Putative 12-oxophytodienoate reductase 10 (OPR10) of Oryza sativa subsp. japonica (Rice).